The chain runs to 210 residues: MVVAKVCGVRDAGAAAAAAAAGAGFVGMVCVPGRRRTVGREEARAIAAAVRGAPGTRLVGVFQDQAPEEVLRLQRELGLDAVQLHGAEDWAAFRAQLPASTLLIKSFVFPRDCEAALAMHRAARGRNCMVLFDAAGGGSGARLDWAALAAWGAAHADVQFMLAGGLTPANVAEAARLPGVVAVDVSSGVETGGAKDGNKIRQFVENAKGI.

The protein belongs to the TrpF family.

It carries out the reaction N-(5-phospho-beta-D-ribosyl)anthranilate = 1-(2-carboxyphenylamino)-1-deoxy-D-ribulose 5-phosphate. The protein operates within amino-acid biosynthesis; L-tryptophan biosynthesis; L-tryptophan from chorismate: step 3/5. The chain is N-(5'-phosphoribosyl)anthranilate isomerase (TRP1) from Eremothecium gossypii (strain ATCC 10895 / CBS 109.51 / FGSC 9923 / NRRL Y-1056) (Yeast).